The sequence spans 301 residues: Lysozyme-like protein 3 (301 aa).

Positions 1-15 (MKLFALLVSITLCYS) are cleaved as a signal peptide. One can recognise a Ch-type lysozyme domain in the interval 64–282 (HAYSVDISFH…HLSQIVHFST (219 aa)).

Belongs to the glycosyl hydrolase 25 family.

In terms of biological role, plays a role in the stress response to heavy metals such as copper, probably in a kgb-1-dependent manner. This chain is Lysozyme-like protein 3, found in Caenorhabditis elegans.